Reading from the N-terminus, the 786-residue chain is Sucrose synthase (786 aa).

The GT-B glycosyltransferase stretch occupies residues 259–736 (MIFSLVVLSP…ALKRVEERYN (478 aa)).

Belongs to the glycosyltransferase 1 family. In terms of assembly, homotetramer.

It carries out the reaction an NDP-alpha-D-glucose + D-fructose = a ribonucleoside 5'-diphosphate + sucrose + H(+). Its function is as follows. Catalyzes the reversible conversion of sucrose and a nucleotide disphosphate (NDP) into fructose and NDP-glucose; although the reaction is freely reversible in vitro, the physiological reaction seems to be sucrose cleavage. Unlike characterized plant enzymes prefers ADP as a cosubstrate, whereas plants prefer UDP. Its preference for ADP over UDP suggests it may directly link sucrose and glycogen metabolism. In Denitrovibrio acetiphilus (strain DSM 12809 / NBRC 114555 / N2460), this protein is Sucrose synthase.